A 3072-amino-acid polypeptide reads, in one-letter code: E1A-binding protein p400 (3072 aa).

Over residues 1-22 (MHHGSGPQNVQHQLQRSRSFTG) the composition is skewed to polar residues. 3 disordered regions span residues 1–55 (MHHG…SPGY), 125–149 (PMSQQVQTQSPTQPSPGPGQTLQNV), and 222–250 (LSQPHAQSGGTIHHLGPQSPAAAGGTGLQ). A compositionally biased stretch (pro residues) spans 31–40 (PNLPPSPAAP). 2 stretches are compositionally biased toward low complexity: residues 41-53 (FAPSASPSAPQSP) and 125-136 (PMSQQVQTQSPT). Phosphoserine is present on residues Ser-52 and Ser-134. Residues Ser-315 and Ser-321 each carry the phosphoserine modification. Disordered stretches follow at residues 485–519 (SLTGSLVVGPGSATEADPFKRQQVMPPTEQSKRPR), 544–601 (MPTV…ASVP), and 635–769 (APIP…SQDK). Low complexity predominate over residues 556 to 569 (QATQLTGQKQSQQQ). Over residues 570–583 (YDPSTGPPVQNAAS) the composition is skewed to polar residues. Pro residues predominate over residues 586–599 (TPPPQLPARLPPAS). Low complexity-rich tracts occupy residues 646–657 (PAPSSQPAQPAL), 668–682 (QTSQLSSQTQTVAST), and 695–710 (SLPTSSSSSSLVPVSG). 2 stretches are compositionally biased toward polar residues: residues 724–741 (NRPSSATNKALSPITSRS) and 754–765 (SPAQNAASSQDG). Phosphoserine is present on residues Ser-735, Ser-741, and Ser-754. The HSA domain occupies 798–870 (LPKLQEAPRP…EQSRLRRIAA (73 aa)). Residues 914–928 (ESRLKGFDTSPEHSL) are compositionally biased toward basic and acidic residues. 2 disordered regions span residues 914–952 (ESRLKGFDTSPEHSLDLGISGRKRKASTSLTDDEVEDEE) and 997–1024 (FQWPQPEPDHEESSGEEDVEDCPSDRES). Thr-922 carries the phosphothreonine modification. Phosphoserine is present on residues Ser-923, Ser-927, and Ser-940. At Thr-944 the chain carries Phosphothreonine. Positions 950–1364 (DEEETIEEEE…SVLSVLTRLQ (415 aa)) are interactions with RUVBL1 and RUVBL2. Residues Ser-1009 and Ser-1010 each carry the phosphoserine modification. The Helicase ATP-binding domain maps to 1102–1267 (AKLYRKNLNG…WTMVHFLIPG (166 aa)). Residue 1115-1122 (DEAGLGKT) participates in ATP binding. Residues 1218 to 1221 (DEMQ) carry the DEAD box-like motif. Lys-1471 is subject to N6-acetyllysine. Residues 1473–1503 (EGRTVAFPSTHPPRMANTNTSTATPQGQVRG) are disordered. Positions 1488–1499 (ANTNTSTATPQG) are enriched in polar residues. Phosphoserine occurs at positions 1646 and 1650. In terms of domain architecture, Helicase C-terminal spans 1815–1972 (KLEALAILLQ…GNDYSMAFLT (158 aa)). 2 disordered regions span residues 2033–2062 (AQRSTEEAVPGSSSVAVSSDSDGSRYDEEP) and 2203–2227 (KERKRHKTDPSAAGRKKKQRHGEAV). Positions 2043 to 2053 (GSSSVAVSSDS) are enriched in low complexity. 2 positions are modified to N6-acetyllysine: Lys-2265 and Lys-2272. In terms of domain architecture, Myb-like spans 2276–2345 (EPAQDSPDWL…QCRNRYENVI (70 aa)). An interaction with ZNF42 region spans residues 2440-2699 (KEKKALADQQ…QQQQQQQQQT (260 aa)). Residues 2441–2534 (EKKALADQQK…PQSKGQPTMT (94 aa)) form a disordered region. Low complexity-rich tracts occupy residues 2446–2455 (ADQQKAQQPP) and 2463–2478 (QQQQQQQQQQQQQQQQ). A compositionally biased stretch (pro residues) spans 2479–2493 (QPPPPPQQPPPPVPQ). The segment covering 2494–2526 (PQAASSQTPAGQPAVQPQPQPQVQTQPQPVQPQ) has biased composition (low complexity). At Ser-2614 the chain carries Phosphoserine. Disordered regions lie at residues 2734–2790 (QKMQ…TGTT) and 3028–3072 (ASLQ…PPCQ). Residues 2739-2754 (PPQPPPPQAQPGPPQQ) show a composition bias toward pro residues. Residues 2755-2775 (PAQVQVQTPQPPQQQQSPQLT) are compositionally biased toward low complexity. Residues 3042 to 3053 (PASSDSPSQQPK) show a composition bias toward polar residues.

Belongs to the SNF2/RAD54 helicase family. SWR1 subfamily. As to quaternary structure, component of the NuA4 histone acetyltransferase complex which contains the catalytic subunit KAT5/TIP60 and the subunits EP400, TRRAP/PAF400, BRD8/SMAP, EPC1, DMAP1/DNMAP1, RUVBL1/TIP49, RUVBL2, ING3, actin, ACTL6A/BAF53A, MORF4L1/MRG15, MORF4L2/MRGX, MRGBP, YEATS4/GAS41, VPS72/YL1 and MEAF6. May also participate in the formation of NuA4 related complexes which lack the KAT5/TIP60 catalytic subunit, but which include the SWI/SNF related protein SRCAP. The NuA4 complex interacts with MYC. EP400 interacts with TRRAP, RUVBL1 and RUVBL2. Component of a SWR1-like complex. Interacts with ZNF42. Interacts with PHF5A. In terms of tissue distribution, expressed in brain, thymus, lung, liver, spleen, kidney, colon and bone marrow.

It localises to the nucleus. Functionally, component of the NuA4 histone acetyltransferase complex which is involved in transcriptional activation of select genes principally by acetylation of nucleosomal histones H4 and H2A. This modification may both alter nucleosome - DNA interactions and promote interaction of the modified histones with other proteins which positively regulate transcription. May be required for transcriptional activation of E2F1 and MYC target genes during cellular proliferation. The NuA4 complex ATPase and helicase activities seem to be, at least in part, contributed by the association of RUVBL1 and RUVBL2 with EP400. Component of a SWR1-like complex that specifically mediates the removal of histone H2A.Z/H2AZ1 from the nucleosome. Regulates transcriptional activity of ZNF42. In Mus musculus (Mouse), this protein is E1A-binding protein p400 (Ep400).